We begin with the raw amino-acid sequence, 1165 residues long: Autophagy-related protein 11 (1165 aa).

Coiled coils occupy residues asparagine 239–methionine 304 and aspartate 670–lysine 853.

This sequence belongs to the ATG11 family. As to quaternary structure, homodimer and potential homooligomers.

The protein resides in the preautophagosomal structure membrane. Functionally, plays an essential role in both non-selective and selective autophagy such as mitophagy. Recruits mitochondria for their selective degradation via autophagy (mitophagy) during starvation, through its interaction with ATG32. Works as scaffold proteins that recruit ATG proteins to the pre-autophagosome (PAS), the site of vesicle/autophagosome formation. Required for ATG9 anterograde transport from the mitochondria to the PAS. In Candida albicans (strain SC5314 / ATCC MYA-2876) (Yeast), this protein is Autophagy-related protein 11.